A 427-amino-acid polypeptide reads, in one-letter code: tRNA(Ile)-lysidine synthase (427 aa).

29-34 (SGGVDS) is a binding site for ATP.

The protein belongs to the tRNA(Ile)-lysidine synthase family.

The protein resides in the cytoplasm. It catalyses the reaction cytidine(34) in tRNA(Ile2) + L-lysine + ATP = lysidine(34) in tRNA(Ile2) + AMP + diphosphate + H(+). Ligates lysine onto the cytidine present at position 34 of the AUA codon-specific tRNA(Ile) that contains the anticodon CAU, in an ATP-dependent manner. Cytidine is converted to lysidine, thus changing the amino acid specificity of the tRNA from methionine to isoleucine. This is tRNA(Ile)-lysidine synthase from Thermosipho africanus (strain TCF52B).